Here is a 504-residue protein sequence, read N- to C-terminus: Deoxyguanosinetriphosphate triphosphohydrolase (504 aa).

The HD domain maps to 66–273 (RLTHSLEVQQ…MEAADDISYC (208 aa)).

Belongs to the dGTPase family. Type 1 subfamily. Homotetramer. Mg(2+) serves as cofactor.

It catalyses the reaction dGTP + H2O = 2'-deoxyguanosine + triphosphate + H(+). Its function is as follows. dGTPase preferentially hydrolyzes dGTP over the other canonical NTPs. This Klebsiella pneumoniae (strain 342) protein is Deoxyguanosinetriphosphate triphosphohydrolase.